The chain runs to 318 residues: tRNA-modifying protein YgfZ (318 aa).

Residues W28 and W182 each coordinate folate.

This sequence belongs to the tRNA-modifying YgfZ family.

Its subcellular location is the cytoplasm. Its function is as follows. Folate-binding protein involved in regulating the level of ATP-DnaA and in the modification of some tRNAs. It is probably a key factor in regulatory networks that act via tRNA modification, such as initiation of chromosomal replication. This chain is tRNA-modifying protein YgfZ, found in Aliivibrio fischeri (strain MJ11) (Vibrio fischeri).